We begin with the raw amino-acid sequence, 59 residues long: Large ribosomal subunit protein uL30 (59 aa).

It belongs to the universal ribosomal protein uL30 family. As to quaternary structure, part of the 50S ribosomal subunit.

The protein is Large ribosomal subunit protein uL30 of Aliivibrio salmonicida (strain LFI1238) (Vibrio salmonicida (strain LFI1238)).